The sequence spans 661 residues: Putative core protein L410 (661 aa).

A compositionally biased stretch (basic and acidic residues) spans 1–11; that stretch reads MADNKGRRDTF. Residues 1 to 26 form a disordered region; the sequence is MADNKGRRDTFDVSGDTNTNATSNKR. Over residues 15–25 the composition is skewed to polar residues; it reads GDTNTNATSNK. Positions 112–140 form a coiled coil; sequence KKENKWSDKEYDEFRKELTNLLTGNRALE.

The protein localises to the virion. This chain is Putative core protein L410, found in Acanthamoeba polyphaga (Amoeba).